The following is a 96-amino-acid chain: DNA-directed RNA polymerase subunit Rpo11 (96 aa).

This sequence belongs to the archaeal Rpo11/eukaryotic RPB11/RPC19 RNA polymerase subunit family. In terms of assembly, part of the RNA polymerase complex.

The protein resides in the cytoplasm. The catalysed reaction is RNA(n) + a ribonucleoside 5'-triphosphate = RNA(n+1) + diphosphate. In terms of biological role, DNA-dependent RNA polymerase (RNAP) catalyzes the transcription of DNA into RNA using the four ribonucleoside triphosphates as substrates. The sequence is that of DNA-directed RNA polymerase subunit Rpo11 from Methanococcus maripaludis (strain C6 / ATCC BAA-1332).